The chain runs to 374 residues: Relaxin-3 receptor 2 (374 aa).

The Extracellular segment spans residues 1–43; that stretch reads MPTLNTSASPPTFFWANASGGSVLSADDAPMPVKFLALRLMVA. N5 and N17 each carry an N-linked (GlcNAc...) asparagine glycan. A helical transmembrane segment spans residues 44 to 64; it reads LAYGLVGAIGLLGNLAVLWVL. Residues 65–78 are Cytoplasmic-facing; it reads SNCARRAPGPPSDT. Residues 79–99 form a helical membrane-spanning segment; that stretch reads FVFNLALADLGLALTLPFWAA. Residues 100-116 lie on the Extracellular side of the membrane; sequence ESALDFHWPFGGALCKM. The cysteines at positions 114 and 191 are disulfide-linked. A helical transmembrane segment spans residues 117–137; the sequence is VLTATVLNVYASIFLITALSV. Over 138–154 the chain is Cytoplasmic; it reads ARYWVVAMAAGPGTHLS. Residues 155 to 175 form a helical membrane-spanning segment; that stretch reads LFWARIATLAVWAAAALVTVP. Topologically, residues 176–209 are extracellular; the sequence is TAVFGVEGEVCGVRLCLLRFPSRYWLGAYQLQRV. A helical transmembrane segment spans residues 210 to 230; sequence VLAFMVPLGVITTSYLLLLAF. Topologically, residues 231–249 are cytoplasmic; sequence LQRRQRRRQDSRVVARSVR. The chain crosses the membrane as a helical span at residues 250–270; that stretch reads ILVASFFLCWFPNHVVTLWGV. The Extracellular segment spans residues 271 to 281; that stretch reads LVKFDLVPWNS. The helical transmembrane segment at 282-302 threads the bilayer; that stretch reads TFYTIQTYVFPVTTCLAHSNS. Residues 303–374 lie on the Cytoplasmic side of the membrane; that stretch reads CLNPVLYCLL…LTNLDRGTPG (72 aa).

Belongs to the G-protein coupled receptor 1 family. As to expression, expressed in a broader range of tissues including brain, kidney, testis, thymus, placenta, prostate, salivary gland, thyroid and colon.

The protein resides in the cell membrane. In terms of biological role, high affinity receptor for INSL5. Also acts as a receptor for RLN3/relaxin-3, as well as bradykinin and kallidin. Binding of the ligand inhibit cAMP accumulation. The polypeptide is Relaxin-3 receptor 2 (RXFP4) (Homo sapiens (Human)).